The chain runs to 447 residues: MDGMKYIISLFFIFVFLEGSKTEQVKHSDTYCVFQDKKYRVGEKWHPYLEPYGLVYCVNCICSENGNVLCSRVRCPSLHCLSPVHIPHLCCPRCPDSLPPVNNKVTSKSCEYNGTTYQHGELFIAEGLFQNRQPNQCSQCSCSEGNVYCGLKTCPKLTCAFPVSVPDSCCRVCRGDAELSWEHADGDIFRQPANREARHSYLRSPYDPPPNRQAGGLPRFPGSRSHRGAVIDSQQASGTIVQIVINNKHKHGQVCVSNGKTYSHGESWHPNLRAFGIVECVLCTCNVTKQECKKIHCPNRYPCKYPQKIDGKCCKVCPEEPPSQNFDSKGSFCGEETMPVYESVFMEDGETTRKVALETERPPQVEVHVWTIQKGILQHFHIEKISKRMFGELHHFKLVTRTTLNQWKLFTEGEAQLSQMCSSQVCRTELEDLVQVLYLGRPEKDHC.

Positions 1-22 (MDGMKYIISLFFIFVFLEGSKT) are cleaved as a signal peptide. 2 VWFC domains span residues 30–95 (TYCV…PRCP) and 108–174 (KSCE…RVCR). N-linked (GlcNAc...) asparagine glycosylation is present at asparagine 113. A Cell attachment site motif is present at residues 174–176 (RGD). Residues 200–224 (SYLRSPYDPPPNRQAGGLPRFPGSR) are disordered. Residues 253-318 (QVCVSNGKTY…IDGKCCKVCP (66 aa)) form the VWFC 3 domain. An N-linked (GlcNAc...) asparagine glycan is attached at asparagine 286.

May be glycosylated. In terms of tissue distribution, expressed in heart, brain, lung, liver, kidney and testis.

The protein localises to the secreted. Its function is as follows. Seems to antagonize the function of BMP4 by binding to it and preventing its interaction with receptors. Alters the fate commitment of neural stem cells from gliogenesis to neurogenesis. Contributes to neuronal differentiation of neural stem cells in the brain by preventing the adoption of a glial fate. May play a crucial role in dorsoventral axis formation. Antagonizes the function of BMP7 and may thus play an important role in the embryonic bone formation. Shows no inhibitory effect on the inducing activity of BMP2. Plays a role during anterior segment eye development. The chain is Chordin-like protein 1 (Chrdl1) from Mus musculus (Mouse).